Consider the following 430-residue polypeptide: Dynactin subunit 2 (430 aa).

Disordered regions lie at residues 1 to 51 (MSEG…IDRS) and 201 to 228 (SLSS…SSSS). Positions 32–44 (SISNLADESSELV) are enriched in polar residues. 2 coiled-coil regions span residues 241 to 319 (TGEQ…QDET) and 397 to 430 (DDSF…QQQQ).

It belongs to the dynactin subunit 2 family. Subunit of dynactin, a multiprotein complex associated with dynein.

It is found in the cytoplasm. Its subcellular location is the cytoskeleton. The protein resides in the membrane. Its function is as follows. Modulates cytoplasmic dynein binding to an organelle, and plays a role in prometaphase chromosome alignment and spindle organization during mitosis. The protein is Dynactin subunit 2 (dynB) of Dictyostelium discoideum (Social amoeba).